An 811-amino-acid polypeptide reads, in one-letter code: Abnormal pharyngeal pumping eat-20 (811 aa).

The signal sequence occupies residues M1–A20. Over Q21 to W749 the chain is Extracellular. N-linked (GlcNAc...) asparagine glycans are attached at residues N90, N171, and N232. 3 EGF-like domains span residues P220–E257, L258–E293, and A301–N335. 9 cysteine pairs are disulfide-bonded: C224/C235, C229/C245, C247/C256, C261/C272, C266/C281, C283/C292, C305/C314, C309/C323, and C325/C334. The N-linked (GlcNAc...) asparagine glycan is linked to N371. 3 disordered regions span residues F544 to T579, F592 to T659, and P690 to S739. Acidic residues predominate over residues D551–E567. Polar residues predominate over residues P570–T579. The segment covering D597–T612 has biased composition (acidic residues). Low complexity predominate over residues P626–T639. Composition is skewed to acidic residues over residues M640 to E655 and I705 to E717. Residues I750 to V770 form a helical membrane-spanning segment. Topologically, residues L771–I811 are cytoplasmic.

The protein resides in the membrane. Its function is as follows. Regulates pharyngeal pumping during feeding. The sequence is that of Abnormal pharyngeal pumping eat-20 (eat-20) from Caenorhabditis briggsae.